We begin with the raw amino-acid sequence, 123 residues long: Small ribosomal subunit protein bS16 (123 aa).

The protein belongs to the bacterial ribosomal protein bS16 family.

This is Small ribosomal subunit protein bS16 from Treponema pallidum (strain Nichols).